The primary structure comprises 426 residues: Aspartate aminotransferase, mitochondrial (426 aa).

The N-terminal 29 residues, 1–29 (MIRSARLISNIKFGQKNIRQFSTNTNWWA), are a transit peptide targeting the mitochondrion. Substrate is bound by residues Gly-60, Trp-156, and Asn-209. The residue at position 273 (Lys-273) is an N6-(pyridoxal phosphate)lysine. Position 401 (Arg-401) interacts with substrate.

The protein belongs to the class-I pyridoxal-phosphate-dependent aminotransferase family. In terms of assembly, homodimer. Pyridoxal 5'-phosphate is required as a cofactor.

The protein resides in the mitochondrion matrix. The protein localises to the cell membrane. The enzyme catalyses L-aspartate + 2-oxoglutarate = oxaloacetate + L-glutamate. The catalysed reaction is L-kynurenine + 2-oxoglutarate = kynurenate + L-glutamate + H2O. Plays a key role in amino acid metabolism. Important for metabolite exchange between mitochondria and cytosol. This Dictyostelium discoideum (Social amoeba) protein is Aspartate aminotransferase, mitochondrial (aatA).